Here is an 844-residue protein sequence, read N- to C-terminus: MQDISNHTPMIQQYLKIKSQYQDILLFYRMGDFYELFFDDAKKAAELLDITLTARGKSNGESIPMAGVPYHAAEAYIAKIVKKGLSIAICEQTGDPNTSKGPVERQVTRIITPATVSEEAFLDSNQDSILVSIFEKNNKYYLAYTSYTQGKIYLVKTLTSLNELKNTVLKLSPQEIITNSRELAQQNPFKKPIKALEEWYYSNFEAKKYINDSLDTNIANNILNLYKNDQLTTIGSILSYLTNILKDTPRHITDISYEQEQDTLNIDINSRINLELDNSSKSSLLSIIGKCKTSLGSRLLKRYFSNPTRNLNILATRHNIINSLVENQHFLKIQDVLSYISDIERIISRVALGTVKPKDLVALRDSLEQLPILKKLLSEKNTPEITNINNRIHQLDELVTLLDKAIIENPPATIRDGGVIKEGFDKELDELKSIKDNSYDFLIKFEELQKQKTGISTLKVGYNRVHGYYIELSKQHADKIPTEYIRRQTLKASERYITEELKNFEDKILSSKEKALAREKLIYETLLKKVIEYYKQIQETAASIAEIDVLANFAERAIKLKLSQPKFNNLAKLELKEVRHLAIEHNIDEPFIPNDTLLSKDTNTLQIITGPNMGGKSTYMRQVAQLIFLAYIGSFVPASYADICDIDTIYTRIGASDDISSGRSTFMVEMTETAYILNNASAKSLVIMDEIGRGTSTFDGLALAKACAEKFAQIGAFTLFATHYFELTELAKQYPNVCNIHFEAKEYKDNIYFMHKAVTGAAKKSYGIQVAKLAGISQDVLESAKQNLYNLEKKQHLAESTQIQAQFELEPTTQNPLQQKLDAIDINTITPLEALNILFELKKR.

610–617 (GPNMGGKS) provides a ligand contact to ATP.

This sequence belongs to the DNA mismatch repair MutS family.

Functionally, this protein is involved in the repair of mismatches in DNA. It is possible that it carries out the mismatch recognition step. This protein has a weak ATPase activity. This is DNA mismatch repair protein MutS from Francisella tularensis subsp. novicida (strain U112).